The sequence spans 115 residues: Ubiquitin-related modifier 1 (115 aa).

Glycine 115 carries the 1-thioglycine modification. Glycine 115 participates in a covalent cross-link: Glycyl lysine isopeptide (Gly-Lys) (interchain with K-? in acceptor proteins).

The protein belongs to the URM1 family. C-terminal thiocarboxylation occurs in 2 steps, it is first acyl-adenylated (-COAMP) via the hesA/moeB/thiF part of UBA4, then thiocarboxylated (-COSH) via the rhodanese domain of UBA4.

Its subcellular location is the cytoplasm. It participates in tRNA modification; 5-methoxycarbonylmethyl-2-thiouridine-tRNA biosynthesis. In terms of biological role, acts as a sulfur carrier required for 2-thiolation of mcm(5)S(2)U at tRNA wobble positions of cytosolic tRNA(Lys), tRNA(Glu) and tRNA(Gln). Serves as sulfur donor in tRNA 2-thiolation reaction by being thiocarboxylated (-COSH) at its C-terminus by the MOCS3 homolog UBA4. The sulfur is then transferred to tRNA to form 2-thiolation of mcm(5)S(2)U. Prior mcm(5) tRNA modification by the elongator complex is required for 2-thiolation. Also acts as a ubiquitin-like protein (UBL) that is covalently conjugated via an isopeptide bond to lysine residues of target proteins such as AHP1. The thiocarboxylated form serves as substrate for conjugation and oxidative stress specifically induces the formation of UBL-protein conjugates. The protein is Ubiquitin-related modifier 1 of Coccidioides immitis (strain RS) (Valley fever fungus).